The chain runs to 134 residues: ATP synthase epsilon chain (134 aa).

It belongs to the ATPase epsilon chain family. As to quaternary structure, F-type ATPases have 2 components, CF(1) - the catalytic core - and CF(0) - the membrane proton channel. CF(1) has five subunits: alpha(3), beta(3), gamma(1), delta(1), epsilon(1). CF(0) has three main subunits: a, b and c.

Its subcellular location is the cellular thylakoid membrane. Its function is as follows. Produces ATP from ADP in the presence of a proton gradient across the membrane. This chain is ATP synthase epsilon chain, found in Prochlorococcus marinus (strain MIT 9215).